The chain runs to 713 residues: Polyribonucleotide nucleotidyltransferase (713 aa).

Asp493 and Asp499 together coordinate Mg(2+). The 60-residue stretch at Pro560–Ile619 folds into the KH domain. Positions Gly629 to Lys697 constitute an S1 motif domain.

This sequence belongs to the polyribonucleotide nucleotidyltransferase family. It depends on Mg(2+) as a cofactor.

It localises to the cytoplasm. The enzyme catalyses RNA(n+1) + phosphate = RNA(n) + a ribonucleoside 5'-diphosphate. Functionally, involved in mRNA degradation. Catalyzes the phosphorolysis of single-stranded polyribonucleotides processively in the 3'- to 5'-direction. The polypeptide is Polyribonucleotide nucleotidyltransferase (Burkholderia pseudomallei (strain 1106a)).